Reading from the N-terminus, the 867-residue chain is Nitrate reductase [NADPH] (867 aa).

Positions 38–58 (DIPLPPPSKEPTEVLSIDKPT) are disordered. C152 serves as a coordination point for Mo-molybdopterin. Residues 514-589 (NRIIDLQEFK…MPDYHIGTMD (76 aa)) form the Cytochrome b5 heme-binding domain. The heme site is built by H549 and H572. The region spanning 615–726 (KSWTKATLVK…KGPTGRFEYL (112 aa)) is the FAD-binding FR-type domain. Residues 669–672 (RSYT), 686–690 (LVKIY), F691, 700–702 (KMT), and T753 contribute to the FAD site. 837 to 846 (MVLICGPEAM) lines the NADP(+) pocket.

The protein belongs to the nitrate reductase family. In terms of assembly, homodimer. The cofactor is FAD. Heme serves as cofactor. Requires Mo-molybdopterin as cofactor.

The catalysed reaction is nitrite + NADP(+) + H2O = nitrate + NADPH + H(+). Nitrate reductase is a key enzyme involved in the first step of nitrate assimilation in plants, fungi and bacteria. The polypeptide is Nitrate reductase [NADPH] (niaD) (Aspergillus niger).